The primary structure comprises 508 residues: 2,3-bisphosphoglycerate-independent phosphoglycerate mutase (508 aa).

Positions 13 and 63 each coordinate Mn(2+). Residue serine 63 is the Phosphoserine intermediate of the active site. Substrate-binding positions include histidine 122, 152-153 (RD), arginine 184, arginine 190, 256-259 (RADR), and lysine 330. Positions 397, 401, 438, 439, and 457 each coordinate Mn(2+).

The protein belongs to the BPG-independent phosphoglycerate mutase family. Monomer. Mn(2+) serves as cofactor.

The enzyme catalyses (2R)-2-phosphoglycerate = (2R)-3-phosphoglycerate. Its pathway is carbohydrate degradation; glycolysis; pyruvate from D-glyceraldehyde 3-phosphate: step 3/5. In terms of biological role, catalyzes the interconversion of 2-phosphoglycerate and 3-phosphoglycerate. The sequence is that of 2,3-bisphosphoglycerate-independent phosphoglycerate mutase from Laribacter hongkongensis (strain HLHK9).